The sequence spans 434 residues: Putative DD-carboxypeptidase TP_0574 (434 aa).

An N-terminal signal peptide occupies residues M1–G19. C20 carries the N-palmitoyl cysteine lipid modification. C20 is lipidated: S-diacylglycerol cysteine.

Probably a monomer; a non-lipidated construct (residues 22-434) is monomeric in solution but crystallizes as a homodimer. Zn(2+) serves as cofactor. In terms of processing, the N-terminus is blocked. Present as a doublet of low abundance 48 kDa and high abundance 47 kDa proteins. The longer form is probably due to readthrough of the stop codon; the extra amino acids at the C-terminus would be X-Lys-Arg-Gly-Val-Leu-Ser-Arg-Val-Ser, a peptide antibody against this sequence detects only the 48 kDa form.

It localises to the cell inner membrane. Functionally, a possible D,D-carboxypeptidase, that releases amino acids sequentially from a proteins C-terminus. Has zinc-dependent carboxypeptidase activity on synthetic depsipeptide substrates. May serve to decrease cross-linking of peptidoglycan, promoting the highly sinusous motility of this spirochaete. Overexpression of the whole protein in E.coli leads to aberrant cell morphology and extrusion of the cytoplasm, while overexpression of a construct with the first 62 resides of the protein fused to PhoA does have this effect, suggesting the whole protein, not the lipoprotein moiety, is toxic. Binds penicillin. Penicillin binding is covalent, does not require lipidation, and is zinc-dependent. While this protein has beta-lactamase activity in vitro, that is probably not its role in vivo, as T.pallidum is very sensitive to penicillin antibiotics. A pathogen-specific membrane antigen. Most abundant of the membrane lipoproteins, only found in pathogenic treponemes, suggesting that it is an important structural moiety in the cell envelope of virulent treponemal subspecies. A lipopeptide corresponding to the first 6 mature residues induces host (human and mouse) cytokine release by monocyte cell lines via TLR2 and CD14; nonlipidated protein does not stimulate host cells. Stimulates host (human) dendritic cell maturation to become MHC class II-positive antigen presenting cells via TLR2, which depends on lipidation; nonlipidated protein does not stimulate maturation. This Treponema pallidum (strain Nichols) protein is Putative DD-carboxypeptidase TP_0574.